A 319-amino-acid polypeptide reads, in one-letter code: Probable secreted beta-glucosidase C2G2.17c (319 aa).

A signal peptide spans 1 to 19; that stretch reads MLFNNFLCFAVSAIPLVSA. N-linked (GlcNAc...) asparagine glycans are attached at residues Asn-36, Asn-39, Asn-45, Asn-48, and Asn-221.

It belongs to the SUN family.

The protein resides in the secreted. Functionally, cell surface beta-glucosidase involved in cell wall biogenesis. This is Probable secreted beta-glucosidase C2G2.17c from Schizosaccharomyces pombe (strain 972 / ATCC 24843) (Fission yeast).